The primary structure comprises 898 residues: Phosphoenolpyruvate carboxylase (898 aa).

Catalysis depends on residues His-134 and Lys-564.

Belongs to the PEPCase type 1 family. Mg(2+) is required as a cofactor.

It carries out the reaction oxaloacetate + phosphate = phosphoenolpyruvate + hydrogencarbonate. In terms of biological role, forms oxaloacetate, a four-carbon dicarboxylic acid source for the tricarboxylic acid cycle. The chain is Phosphoenolpyruvate carboxylase from Chromobacterium violaceum (strain ATCC 12472 / DSM 30191 / JCM 1249 / CCUG 213 / NBRC 12614 / NCIMB 9131 / NCTC 9757 / MK).